A 126-amino-acid polypeptide reads, in one-letter code: MWKEFKSFAIRGNVIDLAIGVIIGGAFGKIVTSLVNDLMMPLLGLLLGGLDFSALSFTFVDAEIKYGLFIQSIVNFFIISFSIFLFIRYISKLKKKDAEEEKAAPDPQEELLKEIRDLLKEQTNRS.

The next 3 membrane-spanning stretches (helical) occupy residues 14–34 (VIDL…VTSL), 40–60 (MPLL…FTFV), and 67–87 (GLFI…FLFI).

It belongs to the MscL family. In terms of assembly, homopentamer.

The protein localises to the cell membrane. Its function is as follows. Channel that opens in response to stretch forces in the membrane lipid bilayer. May participate in the regulation of osmotic pressure changes within the cell. The sequence is that of Large-conductance mechanosensitive channel from Bacillus licheniformis (strain ATCC 14580 / DSM 13 / JCM 2505 / CCUG 7422 / NBRC 12200 / NCIMB 9375 / NCTC 10341 / NRRL NRS-1264 / Gibson 46).